The primary structure comprises 1200 residues: DNA polymerase subunit gamma-1 (1200 aa).

Disordered stretches follow at residues 471-515 and 667-688; these read QKKT…RPSM and MDLS…SSEH. A compositionally biased stretch (basic residues) spans 472–481; the sequence is KKTKISKKQK. Residues 494–512 are compositionally biased toward basic and acidic residues; that stretch reads LVEDHNEDPGPPTEKEESR.

It belongs to the DNA polymerase type-A family. In terms of assembly, heterotrimer composed of a catalytic subunit and a homodimer of accessory subunits. Mg(2+) is required as a cofactor.

The protein resides in the mitochondrion. It localises to the mitochondrion matrix. Its subcellular location is the mitochondrion nucleoid. It carries out the reaction DNA(n) + a 2'-deoxyribonucleoside 5'-triphosphate = DNA(n+1) + diphosphate. Functionally, involved in the replication of mitochondrial DNA. Associates with mitochondrial DNA. This Xenopus laevis (African clawed frog) protein is DNA polymerase subunit gamma-1 (polg).